Consider the following 67-residue polypeptide: ATP synthase F(0) complex subunit 8 (67 aa).

The chain crosses the membrane as a helical span at residues 8-24 (TWFITIISSMATLFILF). The residue at position 54 (Lys-54) is an N6-acetyllysine; alternate. At Lys-54 the chain carries N6-succinyllysine; alternate. Lys-57 carries the post-translational modification N6-acetyllysine.

The protein belongs to the ATPase protein 8 family. In terms of assembly, component of the ATP synthase complex composed at least of ATP5F1A/subunit alpha, ATP5F1B/subunit beta, ATP5MC1/subunit c (homooctomer), MT-ATP6/subunit a, MT-ATP8/subunit 8, ATP5ME/subunit e, ATP5MF/subunit f, ATP5MG/subunit g, ATP5MK/subunit k, ATP5MJ/subunit j, ATP5F1C/subunit gamma, ATP5F1D/subunit delta, ATP5F1E/subunit epsilon, ATP5PF/subunit F6, ATP5PB/subunit b, ATP5PD/subunit d, ATP5PO/subunit OSCP. ATP synthase complex consists of a soluble F(1) head domain (subunits alpha(3) and beta(3)) - the catalytic core - and a membrane F(0) domain - the membrane proton channel (subunits c, a, 8, e, f, g, k and j). These two domains are linked by a central stalk (subunits gamma, delta, and epsilon) rotating inside the F1 region and a stationary peripheral stalk (subunits F6, b, d, and OSCP). Interacts with PRICKLE3.

The protein localises to the mitochondrion membrane. In terms of biological role, subunit 8, of the mitochondrial membrane ATP synthase complex (F(1)F(0) ATP synthase or Complex V) that produces ATP from ADP in the presence of a proton gradient across the membrane which is generated by electron transport complexes of the respiratory chain. ATP synthase complex consist of a soluble F(1) head domain - the catalytic core - and a membrane F(1) domain - the membrane proton channel. These two domains are linked by a central stalk rotating inside the F(1) region and a stationary peripheral stalk. During catalysis, ATP synthesis in the catalytic domain of F(1) is coupled via a rotary mechanism of the central stalk subunits to proton translocation. In vivo, can only synthesize ATP although its ATP hydrolase activity can be activated artificially in vitro. Part of the complex F(0) domain. This chain is ATP synthase F(0) complex subunit 8, found in Rattus norvegicus (Rat).